We begin with the raw amino-acid sequence, 249 residues long: DNA polymerase sliding clamp (249 aa).

The protein belongs to the PCNA family. Homotrimer. The subunits circularize to form a toroid; DNA passes through its center. Replication factor C (RFC) is required to load the toroid on the DNA.

In terms of biological role, sliding clamp subunit that acts as a moving platform for DNA processing. Responsible for tethering the catalytic subunit of DNA polymerase and other proteins to DNA during high-speed replication. This chain is DNA polymerase sliding clamp, found in Thermococcus onnurineus (strain NA1).